A 249-amino-acid polypeptide reads, in one-letter code: Type III pantothenate kinase (249 aa).

6–13 (DVGNTHTT) contacts ATP. Residue 101–104 (GADR) coordinates substrate. Residue Asp103 is the Proton acceptor of the active site. A K(+)-binding site is contributed by Asp123. An ATP-binding site is contributed by Thr126. Position 177 (Thr177) interacts with substrate.

This sequence belongs to the type III pantothenate kinase family. As to quaternary structure, homodimer. The cofactor is NH4(+). Requires K(+) as cofactor.

The protein resides in the cytoplasm. It catalyses the reaction (R)-pantothenate + ATP = (R)-4'-phosphopantothenate + ADP + H(+). The protein operates within cofactor biosynthesis; coenzyme A biosynthesis; CoA from (R)-pantothenate: step 1/5. Catalyzes the phosphorylation of pantothenate (Pan), the first step in CoA biosynthesis. This chain is Type III pantothenate kinase, found in Thermosipho africanus (strain TCF52B).